We begin with the raw amino-acid sequence, 20 residues long: Agglutinin beta-4 chain (20 aa).

The protein belongs to the jacalin lectin family. In terms of assembly, tetramer of four alpha chains associated with two or four beta chains.

Functionally, D-galactose-specific lectin, binds the T-antigen structure Gal-beta1,3-GalNAc (Thomsen-Friedenreich-antigen-specific lectin). Potent and selective stimulant of distinct T- and B-cell functions. Shows a unique ability to specifically recognize IgA-1 from human serum. The chain is Agglutinin beta-4 chain from Artocarpus integer (Jack fruit).